A 190-amino-acid polypeptide reads, in one-letter code: Threonylcarbamoyl-AMP synthase (190 aa).

The YrdC-like domain occupies 7–190; that stretch reads GDAIAAAIDV…ALTGELFRQG (184 aa).

It belongs to the SUA5 family. TsaC subfamily.

It localises to the cytoplasm. The catalysed reaction is L-threonine + hydrogencarbonate + ATP = L-threonylcarbamoyladenylate + diphosphate + H2O. Functionally, required for the formation of a threonylcarbamoyl group on adenosine at position 37 (t(6)A37) in tRNAs that read codons beginning with adenine. Catalyzes the conversion of L-threonine, HCO(3)(-)/CO(2) and ATP to give threonylcarbamoyl-AMP (TC-AMP) as the acyladenylate intermediate, with the release of diphosphate. The protein is Threonylcarbamoyl-AMP synthase of Shigella flexneri.